We begin with the raw amino-acid sequence, 278 residues long: Nucleotide-binding protein Tmel_1373 (278 aa).

Position 10–17 (10–17) interacts with ATP; it reads GLSGAGKS. Residue 58–61 coordinates GTP; the sequence is DSRS.

Belongs to the RapZ-like family.

Displays ATPase and GTPase activities. The polypeptide is Nucleotide-binding protein Tmel_1373 (Thermosipho melanesiensis (strain DSM 12029 / CIP 104789 / BI429)).